The following is a 249-amino-acid chain: Triosephosphate isomerase (249 aa).

Substrate is bound by residues Asn10 and Lys12. The Electrophile role is filled by His94. Glu166 acts as the Proton acceptor in catalysis.

The protein belongs to the triosephosphate isomerase family. As to quaternary structure, homodimer. In terms of processing, the N-terminus is blocked.

The enzyme catalyses D-glyceraldehyde 3-phosphate = dihydroxyacetone phosphate. Its pathway is carbohydrate biosynthesis; gluconeogenesis. It functions in the pathway carbohydrate degradation; glycolysis; D-glyceraldehyde 3-phosphate from glycerone phosphate: step 1/1. The chain is Triosephosphate isomerase (TPI1) from Paracoccidioides lutzii (strain ATCC MYA-826 / Pb01) (Paracoccidioides brasiliensis).